A 101-amino-acid polypeptide reads, in one-letter code: Urease subunit gamma (101 aa).

The protein belongs to the urease gamma subunit family. Heterotrimer of UreA (gamma), UreB (beta) and UreC (alpha) subunits. Three heterotrimers associate to form the active enzyme.

The protein resides in the cytoplasm. The catalysed reaction is urea + 2 H2O + H(+) = hydrogencarbonate + 2 NH4(+). Its pathway is nitrogen metabolism; urea degradation; CO(2) and NH(3) from urea (urease route): step 1/1. The polypeptide is Urease subunit gamma (Ureaplasma parvum serovar 3 (strain ATCC 27815 / 27 / NCTC 11736)).